Here is a 90-residue protein sequence, read N- to C-terminus: UPF0367 protein Ava_2513 (90 aa).

It belongs to the UPF0367 family.

In Trichormus variabilis (strain ATCC 29413 / PCC 7937) (Anabaena variabilis), this protein is UPF0367 protein Ava_2513.